The following is a 150-amino-acid chain: UPF0336 protein SGR_2883 (150 aa).

The 107-residue stretch at 10 to 116 folds into the MaoC-like domain; sequence RTYPPTPAYE…STIEAVKSLA (107 aa).

The protein belongs to the UPF0336 family.

This chain is UPF0336 protein SGR_2883, found in Streptomyces griseus subsp. griseus (strain JCM 4626 / CBS 651.72 / NBRC 13350 / KCC S-0626 / ISP 5235).